The primary structure comprises 339 residues: Putative P2Y purinoceptor 10 (339 aa).

At 1–39 the chain is on the extracellular side; it reads MANLDKYTETFKMGSNSTSTAEIYCNVTNVKFQYSLYAT. Asn-16 and Asn-26 each carry an N-linked (GlcNAc...) asparagine glycan. A helical transmembrane segment spans residues 40-60; it reads TYILIFIPGLLANSAALWVLC. Over 61–68 the chain is Cytoplasmic; the sequence is RFISKKNK. A helical membrane pass occupies residues 69–89; the sequence is AIIFMINLSVADLAHVLSLPL. The Extracellular portion of the chain corresponds to 90–103; it reads RIYYYISHHWPFQR. Residues 104 to 124 traverse the membrane as a helical segment; sequence ALCLLCFYLKYLNMYASICFL. Cysteines 106 and 181 form a disulfide. Residues 125-149 are Cytoplasmic-facing; it reads TCISLQRCFFLLKPFRARDWKRRYD. A helical transmembrane segment spans residues 150 to 170; that stretch reads VGISAAIWIVVGTACLPFPIL. Topologically, residues 171–193 are extracellular; that stretch reads RSTDLNNNKSCFADLGYKQMNAV. Asn-178 carries an N-linked (GlcNAc...) asparagine glycan. Residues 194 to 214 form a helical membrane-spanning segment; sequence ALVGMITVAELAGFVIPVIII. Residues 215–244 lie on the Cytoplasmic side of the membrane; the sequence is AWCTWKTTISLRQPPMAFQGISERQKALRM. Residues 245–265 traverse the membrane as a helical segment; sequence VFMCAAVFFICFTPYHINFIF. At 266–288 the chain is on the extracellular side; it reads YTMVKETIISSCPVVRIALYFHP. A helical membrane pass occupies residues 289 to 309; it reads FCLCLASLCCLLDPILYYFMA. The Cytoplasmic segment spans residues 310-339; that stretch reads SEFRDQLSRHGSSVTRSRLMSKESGSSMIG.

The protein belongs to the G-protein coupled receptor 1 family. In terms of tissue distribution, weakly expressed in blood leukocytes.

The protein localises to the cell membrane. Functionally, putative receptor for purines coupled to G-proteins. This chain is Putative P2Y purinoceptor 10 (P2RY10), found in Homo sapiens (Human).